The following is a 146-amino-acid chain: Ribosome maturation factor RimP (146 aa).

It belongs to the RimP family.

It is found in the cytoplasm. Required for maturation of 30S ribosomal subunits. This is Ribosome maturation factor RimP from Helicobacter pylori (strain J99 / ATCC 700824) (Campylobacter pylori J99).